The sequence spans 395 residues: ATP synthase subunit beta, chloroplastic (395 aa).

72-79 (GGAGVGKT) is a binding site for ATP.

This sequence belongs to the ATPase alpha/beta chains family. In terms of assembly, F-type ATPases have 2 components, CF(1) - the catalytic core - and CF(0) - the membrane proton channel. CF(1) has five subunits: alpha(3), beta(3), gamma(1), delta(1), epsilon(1). CF(0) has four main subunits: a(1), b(1), b'(1) and c(9-12).

Its subcellular location is the plastid. The protein localises to the chloroplast thylakoid membrane. It catalyses the reaction ATP + H2O + 4 H(+)(in) = ADP + phosphate + 5 H(+)(out). Produces ATP from ADP in the presence of a proton gradient across the membrane. The catalytic sites are hosted primarily by the beta subunits. This is ATP synthase subunit beta, chloroplastic from Blechnum occidentale (Hammock fern).